Consider the following 86-residue polypeptide: Exodeoxyribonuclease 7 small subunit (86 aa).

The tract at residues 1 to 26 (MQDELFETEKAPQKNTKNAKNAPKKS) is disordered.

Belongs to the XseB family. Heterooligomer composed of large and small subunits.

The protein localises to the cytoplasm. The catalysed reaction is Exonucleolytic cleavage in either 5'- to 3'- or 3'- to 5'-direction to yield nucleoside 5'-phosphates.. Functionally, bidirectionally degrades single-stranded DNA into large acid-insoluble oligonucleotides, which are then degraded further into small acid-soluble oligonucleotides. In Helicobacter pylori (strain HPAG1), this protein is Exodeoxyribonuclease 7 small subunit.